The primary structure comprises 733 residues: tRNA (guanine(27)-N(2))-dimethyltransferase (733 aa).

Residues 1–18 (MENMAEEELLPLEKEEVE) are compositionally biased toward acidic residues. The disordered stretch occupies residues 1 to 78 (MENMAEEELL…LASAPEEAKS (78 aa)). T26 bears the Phosphothreonine mark. 2 stretches are compositionally biased toward low complexity: residues 39–49 (PDSALDSAPTP) and 57–73 (PALA…ASAP). S66 carries the post-translational modification Phosphoserine. A Nucleolar localization signal motif is present at residues 135-139 (HKLRR). The C2H2-type zinc finger occupies 184–206 (YHCIICSATITRRTDMLGHVRRH). The 462-residue stretch at 227–688 (EILKEADTDV…APLMQFKSIL (462 aa)) folds into the Trm1 methyltransferase domain. Residues R260, D307, D357, and A358 each contribute to the S-adenosyl-L-methionine site. Residues C488, C491, C513, and C515 each coordinate Zn(2+). K585 is covalently cross-linked (Glycyl lysine isopeptide (Lys-Gly) (interchain with G-Cter in SUMO2)). A phosphoserine mark is found at S612 and S707.

It belongs to the class I-like SAM-binding methyltransferase superfamily. Trm1 family. In terms of tissue distribution, widely expressed.

It localises to the nucleus. The protein resides in the nucleolus. It carries out the reaction guanosine(27) in tRNA(Tyr) + 2 S-adenosyl-L-methionine = N(2)-dimethylguanosine(27) in tRNA(Tyr) + 2 S-adenosyl-L-homocysteine + 2 H(+). Functionally, specifically dimethylates a single guanine residue at position 27 of tRNA(Tyr) using S-adenosyl-L-methionine as donor of the methyl groups. Dimethylation at position 27 of tRNA(Tyr) is required for efficient translation of tyrosine codons. Also required to maintain 3-(3-amino-3-carboxypropyl)uridine (acp3U) in the D-loop of several cytoplasmic tRNAs. This Homo sapiens (Human) protein is tRNA (guanine(27)-N(2))-dimethyltransferase.